We begin with the raw amino-acid sequence, 241 residues long: Glucosamine-6-phosphate deaminase (241 aa).

D67 acts as the Proton acceptor; for enolization step in catalysis. Residue N136 is the For ring-opening step of the active site. The active-site Proton acceptor; for ring-opening step is the H138. Residue E143 is the For ring-opening step of the active site.

It belongs to the glucosamine/galactosamine-6-phosphate isomerase family. NagB subfamily.

The catalysed reaction is alpha-D-glucosamine 6-phosphate + H2O = beta-D-fructose 6-phosphate + NH4(+). It participates in amino-sugar metabolism; N-acetylneuraminate degradation; D-fructose 6-phosphate from N-acetylneuraminate: step 5/5. Catalyzes the reversible isomerization-deamination of glucosamine 6-phosphate (GlcN6P) to form fructose 6-phosphate (Fru6P) and ammonium ion. This chain is Glucosamine-6-phosphate deaminase, found in Alkaliphilus oremlandii (strain OhILAs) (Clostridium oremlandii (strain OhILAs)).